The chain runs to 238 residues: ATP synthase subunit O, mitochondrial (238 aa).

The transit peptide at 1–36 (MANRFRSGISFFKTIAVTDSVSSVRSKSLFPALRTY) directs the protein to the mitochondrion. The residue at position 90 (Thr90) is a Phosphothreonine.

This sequence belongs to the ATPase delta chain family. In terms of assembly, F-type ATPases have 2 components, CF(1) - the catalytic core - and CF(0) - the membrane proton channel. CF(1) has five subunits: alpha(3), beta(3), gamma(1), delta(1), epsilon(1). CF(0) has three main subunits: a, b and c.

It is found in the mitochondrion. The protein localises to the mitochondrion inner membrane. In terms of biological role, mitochondrial membrane ATP synthase (F(1)F(0) ATP synthase or Complex V) produces ATP from ADP in the presence of a proton gradient across the membrane which is generated by electron transport complexes of the respiratory chain. F-type ATPases consist of two structural domains, F(1) - containing the extramembraneous catalytic core and F(0) - containing the membrane proton channel, linked together by a central stalk and a peripheral stalk. During catalysis, ATP synthesis in the catalytic domain of F(1) is coupled via a rotary mechanism of the central stalk subunits to proton translocation. Part of the complex F(0) domain and the peripheric stalk, which acts as a stator to hold the catalytic alpha(3)beta(3) subcomplex and subunit a/ATP6 static relative to the rotary elements. The chain is ATP synthase subunit O, mitochondrial from Arabidopsis thaliana (Mouse-ear cress).